The sequence spans 474 residues: Glutathione synthetase (474 aa).

Ala2 carries the post-translational modification N-acetylalanine. Arg125 provides a ligand contact to substrate. ATP is bound at residue Glu144. Residues Glu144 and Asn146 each coordinate Mg(2+). Residues 148-151 (ISAS), 214-216 (ERN), Gln220, and 267-270 (RDGY) contribute to the substrate site. ATP-binding positions include Lys305, 364–373 (KPQREGGGNN), Tyr375, and 398–401 (MEKI). Residue Glu368 participates in Mg(2+) binding. A Phosphoserine modification is found at Ser415. Residue Glu425 coordinates ATP. Arg450 lines the substrate pocket. Positions 452 and 458 each coordinate ATP. 461–462 (VA) contributes to the substrate binding site.

Belongs to the eukaryotic GSH synthase family. Homodimer. Mg(2+) is required as a cofactor.

It carries out the reaction gamma-L-glutamyl-L-cysteine + glycine + ATP = glutathione + ADP + phosphate + H(+). The enzyme catalyses gamma-L-glutamyl-(2S)-2-aminobutanoate + glycine + ATP = ophthalmate + ADP + phosphate + H(+). It participates in sulfur metabolism; glutathione biosynthesis; glutathione from L-cysteine and L-glutamate: step 2/2. Its function is as follows. Catalyzes the production of glutathione from gamma-glutamylcysteine and glycine in an ATP-dependent manner. Glutathione (gamma-glutamylcysteinylglycine, GSH) is the most abundant intracellular thiol in living aerobic cells and is required for numerous processes including the protection of cells against oxidative damage, amino acid transport, the detoxification of foreign compounds, the maintenance of protein sulfhydryl groups in a reduced state and acts as a cofactor for a number of enzymes. Participates in ophthalmate biosynthesis in hepatocytes. This chain is Glutathione synthetase, found in Homo sapiens (Human).